A 157-amino-acid polypeptide reads, in one-letter code: 3-hydroxyacyl-[acyl-carrier-protein] dehydratase FabZ (157 aa).

Residue H58 is part of the active site.

It belongs to the thioester dehydratase family. FabZ subfamily.

It localises to the cytoplasm. The enzyme catalyses a (3R)-hydroxyacyl-[ACP] = a (2E)-enoyl-[ACP] + H2O. Its function is as follows. Involved in unsaturated fatty acids biosynthesis. Catalyzes the dehydration of short chain beta-hydroxyacyl-ACPs and long chain saturated and unsaturated beta-hydroxyacyl-ACPs. The protein is 3-hydroxyacyl-[acyl-carrier-protein] dehydratase FabZ of Rhizorhabdus wittichii (strain DSM 6014 / CCUG 31198 / JCM 15750 / NBRC 105917 / EY 4224 / RW1) (Sphingomonas wittichii).